Reading from the N-terminus, the 169-residue chain is Cytochrome c-type biogenesis protein CcmE (169 aa).

Over 1–7 the chain is Cytoplasmic; sequence MTRKSRR. The chain crosses the membrane as a helical; Signal-anchor for type II membrane protein span at residues 8–28; sequence LILIAACGAVLALALGLILSA. Topologically, residues 29–169 are periplasmic; it reads MSGSIVFFRS…DATLGQRSER (141 aa). Residues histidine 122 and tyrosine 126 each contribute to the heme site. The disordered stretch occupies residues 135-169; sequence LKAQGRWQEGGGKEAPKDAAKPASADATLGQRSER. A compositionally biased stretch (basic and acidic residues) spans 145-154; sequence GGKEAPKDAA.

This sequence belongs to the CcmE/CycJ family.

It is found in the cell inner membrane. Its function is as follows. Heme chaperone required for the biogenesis of c-type cytochromes. Transiently binds heme delivered by CcmC and transfers the heme to apo-cytochromes in a process facilitated by CcmF and CcmH. The polypeptide is Cytochrome c-type biogenesis protein CcmE (Methylorubrum populi (strain ATCC BAA-705 / NCIMB 13946 / BJ001) (Methylobacterium populi)).